We begin with the raw amino-acid sequence, 446 residues long: Forkhead box protein F2 (446 aa).

A compositionally biased stretch (pro residues) spans 1-18 (MSTEGGPPPPPPRPPPAP). Positions 1 to 97 (MSTEGGPPPP…TKKATSGLRR (97 aa)) are disordered. Residues 45-78 (STSSSSSSSSASCASSSSNSVSASAGACKSAASS) are compositionally biased toward low complexity. The fork-head DNA-binding region spans 100–194 (KPPYSYIALI…EEGSFRRRPR (95 aa)). 3 disordered regions span residues 257–278 (AGAP…HMSP), 304–325 (GGGG…SPAM), and 340–371 (AHWS…GLHP). Residues 263–274 (AHPHHLHHHHVP) are compositionally biased toward basic residues. Low complexity predominate over residues 311-325 (GPDSSSSPVPSSPAM).

In terms of assembly, interacts with the transcription factors TBP and TFIIB. In terms of tissue distribution, uniquely expressed in the bronchiolar epithelium and in type II pneumocytes.

Its subcellular location is the nucleus. Probable transcription activator for a number of lung-specific genes. Mediates up-regulation of the E3 ligase IRF2BPL and drives ubiquitination and degradation of CTNNB1. In Mus musculus (Mouse), this protein is Forkhead box protein F2 (Foxf2).